The following is a 326-amino-acid chain: NADH-specific methylglyoxal reductase (326 aa).

Residues 20–21 (TW) and aspartate 54 contribute to the NAD(+) site. Tyrosine 59 acts as the Proton donor in catalysis. NAD(+) is bound by residues glutamine 189, 217–222 (YSPLEQ), glycine 291, and glutamine 297.

The protein belongs to the aldo/keto reductase family. Aldo/keto reductase 11 subfamily. In terms of assembly, monomer.

The enzyme catalyses hydroxyacetone + NAD(+) = methylglyoxal + NADH + H(+). Catalyzes the NADH-dependent reduction of methylglyoxal (2-oxopropanal) in vitro. It is not known if this activity has physiological significance. Cannot use NADPH as a cosubstrate. Seems to play some role in intestinal colonization. This Escherichia coli (strain K12) protein is NADH-specific methylglyoxal reductase (ydjG).